The following is a 252-amino-acid chain: Urease accessory protein UreH (252 aa).

Belongs to the UreD family. In terms of assembly, ureH, UreF and UreG form a complex that acts as a GTP-hydrolysis-dependent molecular chaperone, activating the urease apoprotein by helping to assemble the nickel containing metallocenter of UreC. The UreE protein probably delivers the nickel.

The protein localises to the cytoplasm. In terms of biological role, required for maturation of urease via the functional incorporation of the urease nickel metallocenter. This is Urease accessory protein UreH from Helicobacter hepaticus (strain ATCC 51449 / 3B1).